The primary structure comprises 427 residues: 3-phosphoshikimate 1-carboxyvinyltransferase (427 aa).

The 3-phosphoshikimate site is built by K22, S23, and R27. K22 contacts phosphoenolpyruvate. 2 residues coordinate phosphoenolpyruvate: G96 and R124. 7 residues coordinate 3-phosphoshikimate: S169, S170, Q171, S197, D313, N336, and K340. Q171 provides a ligand contact to phosphoenolpyruvate. The active-site Proton acceptor is the D313. The phosphoenolpyruvate site is built by R344, R386, and K411.

This sequence belongs to the EPSP synthase family. In terms of assembly, monomer.

It is found in the cytoplasm. It catalyses the reaction 3-phosphoshikimate + phosphoenolpyruvate = 5-O-(1-carboxyvinyl)-3-phosphoshikimate + phosphate. It participates in metabolic intermediate biosynthesis; chorismate biosynthesis; chorismate from D-erythrose 4-phosphate and phosphoenolpyruvate: step 6/7. Catalyzes the transfer of the enolpyruvyl moiety of phosphoenolpyruvate (PEP) to the 5-hydroxyl of shikimate-3-phosphate (S3P) to produce enolpyruvyl shikimate-3-phosphate and inorganic phosphate. This Salmonella agona (strain SL483) protein is 3-phosphoshikimate 1-carboxyvinyltransferase.